The chain runs to 461 residues: D-phenylhydantoinase (461 aa).

Positions 59, 61, and 151 each coordinate a divalent metal cation. Lysine 151 bears the N6-carboxylysine mark. A substrate-binding site is contributed by tyrosine 156. Histidine 182 and histidine 239 together coordinate a divalent metal cation. Serine 286 lines the substrate pocket. Aspartate 313 serves as a coordination point for a divalent metal cation. Asparagine 335 serves as a coordination point for substrate.

Belongs to the metallo-dependent hydrolases superfamily. Hydantoinase/dihydropyrimidinase family. Homotetramer. It depends on a divalent metal cation as a cofactor. Post-translationally, carboxylation allows a single lysine to coordinate two divalent metal cations.

The enzyme catalyses D-5-phenylhydantoin + H2O = N-carbamoyl-D-phenylglycine + H(+). Catalyzes the stereospecific hydrolysis of the cyclic amide bond of D-hydantoin derivatives with an aromatic side chains at the 5'-position. Has no activity on dihydropyrimidines. The physiological function is unknown. In Escherichia coli (strain SE11), this protein is D-phenylhydantoinase.